Reading from the N-terminus, the 280-residue chain is Phosphonoacetaldehyde hydrolase (280 aa).

Catalysis depends on Asp-20, which acts as the Nucleophile. Mg(2+) contacts are provided by Asp-20 and Ala-22. Residue Lys-61 is the Schiff-base intermediate with substrate of the active site. Asp-194 provides a ligand contact to Mg(2+).

It belongs to the HAD-like hydrolase superfamily. PhnX family. In terms of assembly, homodimer. Mg(2+) is required as a cofactor.

It catalyses the reaction phosphonoacetaldehyde + H2O = acetaldehyde + phosphate + H(+). In terms of biological role, involved in phosphonate degradation. This Nitratidesulfovibrio vulgaris (strain DSM 19637 / Miyazaki F) (Desulfovibrio vulgaris) protein is Phosphonoacetaldehyde hydrolase.